Consider the following 786-residue polypeptide: MSFTSRSLLASFTGCLLYGTPAIADNGSEPVSPENGIVFPLQTDAVNSCEVPDKKSKEEEDQQPVLIQADSVEASNNSKAVYKGNVHIIKGRQEIKADSITLHQQENIAIAEGNVDYSSMEMRTTSDKVTTNLSTEDTTMVNTAYKMSCQPIRGQAGRVLKTGQEIYQLEDASFTTCPADDNSWRFKASDIELDQSDEWATFYNARFEVLDVPIFYLPYVTVPVGDTRKTGVLIPSIGLDSKNGFELSVPIYWNIAPNYDATTTINYMERRGTQLETEFRYLTELGKGTVDAEYLNEDDKFKDKGSRWGVSWDHSGIYQQHWKFDVEYSKVSDIDYFQDLNSSIGTRDEGQLQQSGEVSYRSQDWDMTMRVRDFQVLVEEQTPYRLMPQIEFNYYAPQFYSEFDFNLHSHISKFTTDDKAKPSATRVHLEPKLSLPLSGTWWSLIPETSLLYTYYQQDFDKQPVGPNGSLNLDHEVSRTIPEVRINGAIYLDSTHKFLGEYLQTLEPKIQYLYVPEVDQSNIYGGTGDGGYDSSKLQLDYYGLFRDRQYSGVDYIADANQFSVGATSRFYDDAYKERMNISFGQILYLNGSGTEQNNDDKNSSAWAMESDFNYDDYLFYHGGIQYDSNVSELQVANSTLEYRFSKGYIQANYRYVSKNYIESNVNFEDDLSLITQHGIYQAGLLSEYNLGRNWALKGQYFHDTKEDQMIEALVGVTYLSDCWSFGLTYSDQLIAPESAKTIGTYEPEYESNLMLSIAIRGLGNNTGITSGSANNALDYGRPFYLNN.

A signal peptide spans 1 to 24 (MSFTSRSLLASFTGCLLYGTPAIA).

This sequence belongs to the LptD family. Component of the lipopolysaccharide transport and assembly complex. Interacts with LptE and LptA.

The protein localises to the cell outer membrane. Functionally, together with LptE, is involved in the assembly of lipopolysaccharide (LPS) at the surface of the outer membrane. This is LPS-assembly protein LptD from Aliivibrio fischeri (strain ATCC 700601 / ES114) (Vibrio fischeri).